The chain runs to 432 residues: Glutamate-1-semialdehyde 2,1-aminomutase (432 aa).

K272 is modified (N6-(pyridoxal phosphate)lysine).

Belongs to the class-III pyridoxal-phosphate-dependent aminotransferase family. HemL subfamily. Homodimer. The cofactor is pyridoxal 5'-phosphate.

It is found in the cytoplasm. It catalyses the reaction (S)-4-amino-5-oxopentanoate = 5-aminolevulinate. Its pathway is porphyrin-containing compound metabolism; protoporphyrin-IX biosynthesis; 5-aminolevulinate from L-glutamyl-tRNA(Glu): step 2/2. It functions in the pathway porphyrin-containing compound metabolism; chlorophyll biosynthesis. The polypeptide is Glutamate-1-semialdehyde 2,1-aminomutase (Cyanothece sp. (strain PCC 7425 / ATCC 29141)).